We begin with the raw amino-acid sequence, 228 residues long: MQEAGIDEFAAGGGHVEPAAEVDPAAALKAELRSKPGDWYVIHSYAGYENKVKANLETRVQNLDVGDCIFQVEVPTEEVTEIKNGQRRLVNRKVLPGYILVRMDLTDDSWAAVRNTPGVTGFVGATSRPSALALDDVVKFLLPSGSAKKDAKGAVSTAAAAEAGGLERSIIEVDYEVGESVTVMDGPFATLPATISEVNAEQQKLKVLVSIFGRETPVELTFSQVSKI.

This sequence belongs to the NusG family.

In terms of biological role, participates in transcription elongation, termination and antitermination. This chain is Transcription termination/antitermination protein NusG, found in Mycobacterium leprae (strain TN).